Here is a 424-residue protein sequence, read N- to C-terminus: CinA-like protein (424 aa).

Belongs to the CinA family.

This is CinA-like protein from Prochlorococcus marinus (strain AS9601).